The following is a 151-amino-acid chain: UPF0178 protein Suden_0449 (151 aa).

The protein belongs to the UPF0178 family.

In Sulfurimonas denitrificans (strain ATCC 33889 / DSM 1251) (Thiomicrospira denitrificans (strain ATCC 33889 / DSM 1251)), this protein is UPF0178 protein Suden_0449.